Here is an 890-residue protein sequence, read N- to C-terminus: Translation initiation factor IF-2 (890 aa).

Residues 110–216 (ISKPISKAPQ…KKPLIKTQDH (107 aa)) are disordered. The segment covering 135–148 (VPKRKGLVIIKKKR) has biased composition (basic residues). The span at 184-199 (KSYNEPKNKENDDIKK) shows a compositional bias: basic and acidic residues. Residues 200–210 (QKVKKEKKKPL) are compositionally biased toward basic residues. The region spanning 387–554 (TRPPVVTIMG…NILLQAEILE (168 aa)) is the tr-type G domain. A G1 region spans residues 396 to 403 (GHVDHGKT). Residue 396 to 403 (GHVDHGKT) coordinates GTP. A G2 region spans residues 421-425 (GITQH). Positions 442–445 (DTPG) are G3. GTP is bound by residues 442–446 (DTPGH) and 496–499 (NKMD). Residues 496-499 (NKMD) form a G4 region. The interval 532-534 (SAR) is G5.

Belongs to the TRAFAC class translation factor GTPase superfamily. Classic translation factor GTPase family. IF-2 subfamily.

It is found in the cytoplasm. One of the essential components for the initiation of protein synthesis. Protects formylmethionyl-tRNA from spontaneous hydrolysis and promotes its binding to the 30S ribosomal subunits. Also involved in the hydrolysis of GTP during the formation of the 70S ribosomal complex. The protein is Translation initiation factor IF-2 of Aliarcobacter butzleri (strain RM4018) (Arcobacter butzleri).